The chain runs to 146 residues: Large ribosomal subunit protein uL15 (146 aa).

Residues 1–54 (MKLHELRPAAGSKSAPKRVGRGTGSGLGRNAGKGEKGQNARSGGGVRPGFEGGQ) form a disordered region. 2 stretches are compositionally biased toward gly residues: residues 21–31 (RGTGSGLGRNA) and 42–52 (SGGGVRPGFEG).

This sequence belongs to the universal ribosomal protein uL15 family. As to quaternary structure, part of the 50S ribosomal subunit.

Its function is as follows. Binds to the 23S rRNA. The sequence is that of Large ribosomal subunit protein uL15 from Clostridium perfringens (strain ATCC 13124 / DSM 756 / JCM 1290 / NCIMB 6125 / NCTC 8237 / Type A).